The sequence spans 333 residues: Protoheme IX farnesyltransferase (333 aa).

The next 8 membrane-spanning stretches (helical) occupy residues 36-56 (LIPLLLATTLGGMALTEGWPL), 61-81 (LVCTLGGGALAAAAAGVLNCL), 107-127 (AAFAGAVSCALAAATLLVSGV), 130-150 (LAAGLSLLGLCSYVLLYTALL), 158-178 (IVIGGVAGAIPPLVGAAAATG), 186-206 (WLFALVMVWTPAHFWALALLL), 243-263 (FLGVWALPEGGLLYGLLLLPF), and 284-304 (AKGLFRWSILYLFGICLLLVF).

Belongs to the UbiA prenyltransferase family. Protoheme IX farnesyltransferase subfamily.

It localises to the cell inner membrane. The enzyme catalyses heme b + (2E,6E)-farnesyl diphosphate + H2O = Fe(II)-heme o + diphosphate. The protein operates within porphyrin-containing compound metabolism; heme O biosynthesis; heme O from protoheme: step 1/1. Its function is as follows. Converts heme B (protoheme IX) to heme O by substitution of the vinyl group on carbon 2 of heme B porphyrin ring with a hydroxyethyl farnesyl side group. This Synechococcus sp. (strain WH7803) protein is Protoheme IX farnesyltransferase.